The primary structure comprises 449 residues: Glucose-6-phosphate isomerase (449 aa).

Glu-291 (proton donor) is an active-site residue. Catalysis depends on residues His-312 and Lys-426.

It belongs to the GPI family.

It is found in the cytoplasm. It catalyses the reaction alpha-D-glucose 6-phosphate = beta-D-fructose 6-phosphate. Its pathway is carbohydrate biosynthesis; gluconeogenesis. It participates in carbohydrate degradation; glycolysis; D-glyceraldehyde 3-phosphate and glycerone phosphate from D-glucose: step 2/4. In terms of biological role, catalyzes the reversible isomerization of glucose-6-phosphate to fructose-6-phosphate. The sequence is that of Glucose-6-phosphate isomerase from Enterococcus faecalis (strain ATCC 700802 / V583).